The sequence spans 276 residues: Bis(5'-nucleosyl)-tetraphosphatase, symmetrical (276 aa).

The protein belongs to the Ap4A hydrolase family.

It carries out the reaction P(1),P(4)-bis(5'-adenosyl) tetraphosphate + H2O = 2 ADP + 2 H(+). Its function is as follows. Hydrolyzes diadenosine 5',5'''-P1,P4-tetraphosphate to yield ADP. This Legionella pneumophila subsp. pneumophila (strain Philadelphia 1 / ATCC 33152 / DSM 7513) protein is Bis(5'-nucleosyl)-tetraphosphatase, symmetrical.